The primary structure comprises 469 residues: UDP-N-acetylmuramoylalanine--D-glutamate ligase (469 aa).

121–127 (GTNGKST) serves as a coordination point for ATP.

This sequence belongs to the MurCDEF family.

The protein localises to the cytoplasm. It carries out the reaction UDP-N-acetyl-alpha-D-muramoyl-L-alanine + D-glutamate + ATP = UDP-N-acetyl-alpha-D-muramoyl-L-alanyl-D-glutamate + ADP + phosphate + H(+). It functions in the pathway cell wall biogenesis; peptidoglycan biosynthesis. In terms of biological role, cell wall formation. Catalyzes the addition of glutamate to the nucleotide precursor UDP-N-acetylmuramoyl-L-alanine (UMA). In Agrobacterium fabrum (strain C58 / ATCC 33970) (Agrobacterium tumefaciens (strain C58)), this protein is UDP-N-acetylmuramoylalanine--D-glutamate ligase.